We begin with the raw amino-acid sequence, 262 residues long: Cytochrome c oxidase subunit 3 (262 aa).

Transmembrane regions (helical) follow at residues Y39–W59, G83–F103, M120–A140, G163–I183, A201–L221, and A240–W260.

It belongs to the cytochrome c oxidase subunit 3 family. As to quaternary structure, component of the cytochrome c oxidase (complex IV, CIV), a multisubunit enzyme composed of a catalytic core of 3 subunits and several supernumerary subunits. The complex exists as a monomer or a dimer and forms supercomplexes (SCs) in the inner mitochondrial membrane with ubiquinol-cytochrome c oxidoreductase (cytochrome b-c1 complex, complex III, CIII).

Its subcellular location is the mitochondrion inner membrane. The enzyme catalyses 4 Fe(II)-[cytochrome c] + O2 + 8 H(+)(in) = 4 Fe(III)-[cytochrome c] + 2 H2O + 4 H(+)(out). Its function is as follows. Component of the cytochrome c oxidase, the last enzyme in the mitochondrial electron transport chain which drives oxidative phosphorylation. The respiratory chain contains 3 multisubunit complexes succinate dehydrogenase (complex II, CII), ubiquinol-cytochrome c oxidoreductase (cytochrome b-c1 complex, complex III, CIII) and cytochrome c oxidase (complex IV, CIV), that cooperate to transfer electrons derived from NADH and succinate to molecular oxygen, creating an electrochemical gradient over the inner membrane that drives transmembrane transport and the ATP synthase. Cytochrome c oxidase is the component of the respiratory chain that catalyzes the reduction of oxygen to water. Electrons originating from reduced cytochrome c in the intermembrane space (IMS) are transferred via the dinuclear copper A center (CU(A)) of subunit 2 and heme A of subunit 1 to the active site in subunit 1, a binuclear center (BNC) formed by heme A3 and copper B (CU(B)). The BNC reduces molecular oxygen to 2 water molecules using 4 electrons from cytochrome c in the IMS and 4 protons from the mitochondrial matrix. This chain is Cytochrome c oxidase subunit 3 (mt:CoIII), found in Drosophila yakuba (Fruit fly).